We begin with the raw amino-acid sequence, 76 residues long: Small ribosomal subunit protein bS21C (76 aa).

Positions glycine 52–lysine 76 are disordered.

Belongs to the bacterial ribosomal protein bS21 family.

This is Small ribosomal subunit protein bS21C (rpsU3) from Agrobacterium fabrum (strain C58 / ATCC 33970) (Agrobacterium tumefaciens (strain C58)).